Reading from the N-terminus, the 567-residue chain is Dihydroxy-acid dehydratase (567 aa).

Position 52 (Cys-52) interacts with [2Fe-2S] cluster. A Mg(2+)-binding site is contributed by Asp-84. Cys-125 is a binding site for [2Fe-2S] cluster. Mg(2+) contacts are provided by Asp-126 and Lys-127. Position 127 is an N6-carboxylysine (Lys-127). Cys-197 contacts [2Fe-2S] cluster. Residue Glu-448 coordinates Mg(2+). The Proton acceptor role is filled by Ser-474.

It belongs to the IlvD/Edd family. Homodimer. [2Fe-2S] cluster is required as a cofactor. Requires Mg(2+) as cofactor.

The enzyme catalyses (2R)-2,3-dihydroxy-3-methylbutanoate = 3-methyl-2-oxobutanoate + H2O. It carries out the reaction (2R,3R)-2,3-dihydroxy-3-methylpentanoate = (S)-3-methyl-2-oxopentanoate + H2O. Its pathway is amino-acid biosynthesis; L-isoleucine biosynthesis; L-isoleucine from 2-oxobutanoate: step 3/4. It functions in the pathway amino-acid biosynthesis; L-valine biosynthesis; L-valine from pyruvate: step 3/4. Functionally, functions in the biosynthesis of branched-chain amino acids. Catalyzes the dehydration of (2R,3R)-2,3-dihydroxy-3-methylpentanoate (2,3-dihydroxy-3-methylvalerate) into 2-oxo-3-methylpentanoate (2-oxo-3-methylvalerate) and of (2R)-2,3-dihydroxy-3-methylbutanoate (2,3-dihydroxyisovalerate) into 2-oxo-3-methylbutanoate (2-oxoisovalerate), the penultimate precursor to L-isoleucine and L-valine, respectively. The polypeptide is Dihydroxy-acid dehydratase (Streptococcus pneumoniae (strain CGSP14)).